Consider the following 200-residue polypeptide: Cytochrome c biogenesis ATP-binding export protein CcmA (200 aa).

The 200-residue stretch at 1–200 (MRLSGRGLRC…TREMRIGAAA (200 aa)) folds into the ABC transporter domain. Residue 35 to 42 (GRNGAGKT) participates in ATP binding.

Belongs to the ABC transporter superfamily. CcmA exporter (TC 3.A.1.107) family. As to quaternary structure, the complex is composed of two ATP-binding proteins (CcmA) and two transmembrane proteins (CcmB).

It localises to the cell inner membrane. The catalysed reaction is heme b(in) + ATP + H2O = heme b(out) + ADP + phosphate + H(+). In terms of biological role, part of the ABC transporter complex CcmAB involved in the biogenesis of c-type cytochromes; once thought to export heme, this seems not to be the case, but its exact role is uncertain. Responsible for energy coupling to the transport system. The polypeptide is Cytochrome c biogenesis ATP-binding export protein CcmA (Rhodopseudomonas palustris (strain HaA2)).